We begin with the raw amino-acid sequence, 169 residues long: MSNPMRTPMVEKVIVHMGVGESGQHLVNAEEILKTITGQEVVRCFAKRTLPAFSIKKNEPIGCKVTLRGQRAQEFLGTSFEIIEKTLSRAQFDSLGNVSFGIEEHTDFPGMRYDPNIGVFGMDVTVVLKRPGERICKRRIATRKIPTDHRVTVDDAIAFLNESYGVEVM.

Belongs to the universal ribosomal protein uL5 family. As to quaternary structure, part of the 50S ribosomal subunit; contacts the 5S rRNA and probably tRNA. Forms a bridge to the 30S subunit in the 70S ribosome.

Functionally, this is one of the proteins that bind and probably mediate the attachment of the 5S RNA into the large ribosomal subunit, where it forms part of the central protuberance. In the 70S ribosome it contacts protein S13 of the 30S subunit (bridge B1b), connecting the 2 subunits; this bridge is implicated in subunit movement. May contact the P site tRNA; the 5S rRNA and some of its associated proteins might help stabilize positioning of ribosome-bound tRNAs. This Methanosarcina mazei (strain ATCC BAA-159 / DSM 3647 / Goe1 / Go1 / JCM 11833 / OCM 88) (Methanosarcina frisia) protein is Large ribosomal subunit protein uL5.